The sequence spans 446 residues: N-succinylarginine dihydrolase (446 aa).

Residues 19–28 (AGLSFGNVAS), Asn110, and 137–138 (HR) each bind substrate. Glu174 is an active-site residue. Residue Arg213 participates in substrate binding. His249 is a catalytic residue. Positions 251 and 364 each coordinate substrate. The active-site Nucleophile is Cys370.

This sequence belongs to the succinylarginine dihydrolase family. In terms of assembly, homodimer.

The enzyme catalyses N(2)-succinyl-L-arginine + 2 H2O + 2 H(+) = N(2)-succinyl-L-ornithine + 2 NH4(+) + CO2. It participates in amino-acid degradation; L-arginine degradation via AST pathway; L-glutamate and succinate from L-arginine: step 2/5. Functionally, catalyzes the hydrolysis of N(2)-succinylarginine into N(2)-succinylornithine, ammonia and CO(2). In Burkholderia lata (strain ATCC 17760 / DSM 23089 / LMG 22485 / NCIMB 9086 / R18194 / 383), this protein is N-succinylarginine dihydrolase.